Here is a 465-residue protein sequence, read N- to C-terminus: Presenilin spe-4 (465 aa).

At 1 to 18 the chain is on the cytoplasmic side; sequence MDTLRSISSELVRSSQLR. Residues 19-39 form a helical membrane-spanning segment; sequence WTLFSVIANMSLTLSIWIGVY. At 40 to 71 the chain is on the lumenal side; the sequence is NMEVNSELSKTYFLDPSFEQTTGNLLLDGFIN. A helical transmembrane segment spans residues 72–92; the sequence is GVGTILVLGCVSFIMLAFVLF. The Cytoplasmic segment spans residues 93–96; that stretch reads DFRR. A helical transmembrane segment spans residues 97-117; sequence IVKAWLTLSCLLILFGVSAQT. The Lumenal portion of the chain corresponds to 118–136; sequence LHDMFSQVFDQDDNNQYYM. The helical transmembrane segment at 137 to 157 threads the bilayer; sequence TIVLIVVPTVVYGFGGIYAFF. Over 158 to 160 the chain is Cytoplasmic; the sequence is SNS. The helical transmembrane segment at 161–181 threads the bilayer; it reads SLILHQIFVVTNCSLISVFYL. Topologically, residues 182–190 are lumenal; the sequence is RVFPSKTTW. The chain crosses the membrane as a helical span at residues 191–211; that stretch reads FVLWIVLFWDLFAVLAPMGPL. The active site involves aspartate 200. Topologically, residues 212 to 389 are cytoplasmic; sequence KKVQEKASDY…DALNDGEVLR (178 aa). Positions 287-356 are disordered; that stretch reads INPDSVPTEH…SDISTAEECD (70 aa). Positions 326–350 are enriched in low complexity; sequence SETSSGSSNLSSSDSSTTVSTSDIS. The helical transmembrane segment at 390–410 threads the bilayer; the sequence is LGFGDFVFYSLLIGQAAASGC. The active site involves aspartate 394. Residue proline 411 is a topological domain, lumenal. Residues 412–432 traverse the membrane as a helical segment; sequence FAVISAALGILFGLVVTLTVF. At 433-439 the chain is on the cytoplasmic side; the sequence is STEESTT. Positions 440–442 match the PAL motif; sequence PAL. Residues 440-460 constitute an intramembrane region (helical); it reads PALPLPVICGTFCYFSSMFFW. The Cytoplasmic segment spans residues 461 to 465; sequence EQLYG.

The protein belongs to the peptidase A22A family. Homodimer. Potential component of the gamma-secretase complex, a complex probably composed of the presenilin homodimer (sel-12, hop-1 or spe-4), nicastrin (aph-2), aph-1 and pen-2.

The protein localises to the endoplasmic reticulum membrane. Its subcellular location is the golgi apparatus. It is found in the cis-Golgi network membrane. Functionally, potential catalytic subunit of the gamma-secretase complex during spermatogenesis, an endoprotease complex that catalyzes the intramembrane cleavage of integral membrane proteins such as Notch receptors (lin-12 or glp-1). Involved in spermatid formation during meiosis II. May be required for proper localization of macromolecules that are subject to asymmetric partitioning during spermatogenesis. The chain is Presenilin spe-4 from Caenorhabditis elegans.